A 58-amino-acid polypeptide reads, in one-letter code: Ribulose bisphosphate carboxylase large chain (58 aa).

Positions methionine 1–serine 2 are excised as a propeptide. Position 3 is an N-acetylproline (proline 3). Lysine 14 is subject to N6,N6,N6-trimethyllysine.

The protein belongs to the RuBisCO large chain family. Type I subfamily. In terms of assembly, heterohexadecamer of 8 large chains and 8 small chains.

The protein localises to the plastid. It is found in the chloroplast. The catalysed reaction is 2 (2R)-3-phosphoglycerate + 2 H(+) = D-ribulose 1,5-bisphosphate + CO2 + H2O. It catalyses the reaction D-ribulose 1,5-bisphosphate + O2 = 2-phosphoglycolate + (2R)-3-phosphoglycerate + 2 H(+). Functionally, ruBisCO catalyzes two reactions: the carboxylation of D-ribulose 1,5-bisphosphate, the primary event in carbon dioxide fixation, as well as the oxidative fragmentation of the pentose substrate in the photorespiration process. Both reactions occur simultaneously and in competition at the same active site. This is Ribulose bisphosphate carboxylase large chain (rbcL) from Euonymus maackii (Maack's spindle tree).